The sequence spans 159 residues: Large ribosomal subunit protein uL23m (159 aa).

It belongs to the universal ribosomal protein uL23 family. In terms of assembly, component of the mitochondrial ribosome large subunit (39S) which comprises a 16S rRNA and about 50 distinct proteins.

It is found in the mitochondrion. This Caenorhabditis elegans protein is Large ribosomal subunit protein uL23m (mrpl-23).